The sequence spans 911 residues: Protein translocase subunit SecA (911 aa).

Residues Q87, 105-109 (GEGKT), and D512 each bind ATP. The segment at 861 to 880 (APGLGSEQLSEEGAEVAVAS) is disordered. The Zn(2+) site is built by C895, C897, C906, and H907.

This sequence belongs to the SecA family. In terms of assembly, monomer and homodimer. Part of the essential Sec protein translocation apparatus which comprises SecA, SecYEG and auxiliary proteins SecDF-YajC and YidC. Zn(2+) serves as cofactor.

Its subcellular location is the cell inner membrane. It is found in the cytoplasm. The enzyme catalyses ATP + H2O + cellular proteinSide 1 = ADP + phosphate + cellular proteinSide 2.. In terms of biological role, part of the Sec protein translocase complex. Interacts with the SecYEG preprotein conducting channel. Has a central role in coupling the hydrolysis of ATP to the transfer of proteins into and across the cell membrane, serving both as a receptor for the preprotein-SecB complex and as an ATP-driven molecular motor driving the stepwise translocation of polypeptide chains across the membrane. This Pseudomonas putida (strain ATCC 47054 / DSM 6125 / CFBP 8728 / NCIMB 11950 / KT2440) protein is Protein translocase subunit SecA.